Here is a 91-residue protein sequence, read N- to C-terminus: Bombyxin C-1 (91 aa).

The first 19 residues, 1 to 19 (MKLVMLLVVVSAMLVLGGA), serve as a signal peptide directing secretion. Position 20 is a pyrrolidone carboxylic acid (glutamine 20). 3 disulfides stabilise this stretch: cysteine 27–cysteine 76, cysteine 39–cysteine 89, and cysteine 75–cysteine 80. The propeptide at 47–67 (SGSQYAGYGWPWLPPFSSSRG) is c peptide like.

Belongs to the insulin family. As to quaternary structure, heterodimer of a B chain and an A chain linked by two disulfide bonds.

It is found in the secreted. In terms of biological role, brain peptide responsible for activation of prothoracic glands to produce ecdysone in insects. The protein is Bombyxin C-1 (BBXC1) of Bombyx mori (Silk moth).